We begin with the raw amino-acid sequence, 248 residues long: Probable transcriptional regulatory protein PSPA7_4544 (248 aa).

The protein belongs to the TACO1 family.

It localises to the cytoplasm. This chain is Probable transcriptional regulatory protein PSPA7_4544, found in Pseudomonas paraeruginosa (strain DSM 24068 / PA7) (Pseudomonas aeruginosa (strain PA7)).